A 495-amino-acid chain; its full sequence is Protein adenylyltransferase Fic (495 aa).

The segment at 1-23 is disordered; it reads MGTEAEPPSPPSPPAQQQEQANP. The helical transmembrane segment at 36–58 threads the bilayer; the sequence is LYRLVLFFIAGSLTAWMFHAFSS. TPR repeat units lie at residues 121–154 and 155–189; these read ALVS…APRH and PEVL…SPSN. The Inhibitory (S/T)XXXE(G/N) motif signature appears at 246–251; it reads SVGIEG. ATP-binding positions include Glu-250 and 331–334; that span reads VGGH. Residues 300 to 435 form the Fido domain; sequence ITIKDILELH…IRPFVRFIAD (136 aa). His-378 is a catalytic residue. ATP contacts are provided by residues 382 to 389, 414 to 415, and Asn-422; these read DGNGRTSR and YY.

Belongs to the fic family. As to quaternary structure, homodimer.

The protein resides in the membrane. It catalyses the reaction L-tyrosyl-[protein] + ATP = O-(5'-adenylyl)-L-tyrosyl-[protein] + diphosphate. The enzyme catalyses L-threonyl-[protein] + ATP = 3-O-(5'-adenylyl)-L-threonyl-[protein] + diphosphate. The catalysed reaction is 3-O-(5'-adenylyl)-L-threonyl-[protein] + H2O = L-threonyl-[protein] + AMP + H(+). The side chain of Glu-250 determines which of the two opposing activities (AMPylase or de-AMPylase) will take place. In response to endoplasmic reticulum stress, mediates de-AMPylase activity. Adenylyltransferase activity is inhibited by the inhibitory helix present at the N-terminus: Glu-250 binds ATP and competes with ATP-binding at Arg-389, thereby preventing adenylyltransferase activity. In unstressed cells, disengagement of Glu-250 promotes adenylyltransferase activity. Activation dissociates ATP-binding from Glu-250, allowing ordered binding of the entire ATP moiety with the alpha-phosphate in an orientation that is productive for accepting an incoming target hydroxyl side chain. Protein that can both mediate the addition of adenosine 5'-monophosphate (AMP) to specific residues of target proteins (AMPylation), and the removal of the same modification from target proteins (de-AMPylation), depending on the context. The side chain of Glu-250 determines which of the two opposing activities (AMPylase or de-AMPylase) will take place. Acts as a key regulator of the unfolded protein response (UPR) by mediating AMPylation or de-AMPylation of Hsc70-3/BiP. In unstressed cells, acts as an adenylyltransferase by mediating AMPylation of Hsc70-3/BiP at 'Thr-518', thereby inactivating it. In response to endoplasmic reticulum stress, acts as a phosphodiesterase by mediating removal of ATP (de-AMPylation) from Hsc70-3/BiP at 'Thr-518', leading to restore HSPA5/BiP activity. This chain is Protein adenylyltransferase Fic, found in Drosophila erecta (Fruit fly).